We begin with the raw amino-acid sequence, 99 residues long: Nucleoid-associated protein SZO_16661 (99 aa).

This sequence belongs to the YbaB/EbfC family. In terms of assembly, homodimer.

It localises to the cytoplasm. The protein resides in the nucleoid. Its function is as follows. Binds to DNA and alters its conformation. May be involved in regulation of gene expression, nucleoid organization and DNA protection. This is Nucleoid-associated protein SZO_16661 from Streptococcus equi subsp. zooepidemicus (strain H70).